The sequence spans 282 residues: 2-dehydro-3-deoxyphosphooctonate aldolase (282 aa).

It belongs to the KdsA family.

It localises to the cytoplasm. It catalyses the reaction D-arabinose 5-phosphate + phosphoenolpyruvate + H2O = 3-deoxy-alpha-D-manno-2-octulosonate-8-phosphate + phosphate. It functions in the pathway carbohydrate biosynthesis; 3-deoxy-D-manno-octulosonate biosynthesis; 3-deoxy-D-manno-octulosonate from D-ribulose 5-phosphate: step 2/3. Its pathway is bacterial outer membrane biogenesis; lipopolysaccharide biosynthesis. This chain is 2-dehydro-3-deoxyphosphooctonate aldolase, found in Shewanella sp. (strain W3-18-1).